Reading from the N-terminus, the 304-residue chain is Killer cell immunoglobulin-like receptor 2DS2 (304 aa).

Positions 1 to 21 are cleaved as a signal peptide; sequence MSLMVVSMACVGFFLLQGAWP. Topologically, residues 22-245 are extracellular; sequence HEGVHRKPSL…SKTGNPRHLH (224 aa). 2 Ig-like C2-type domains span residues 42-107 and 142-205; these read EETV…VTHS and GESV…FRDS. 2 cysteine pairs are disulfide-bonded: cysteine 49/cysteine 100 and cysteine 149/cysteine 198. Asparagine 84, asparagine 178, and asparagine 211 each carry an N-linked (GlcNAc...) asparagine glycan. The interval 220–239 is disordered; that stretch reads VTGNPSNSWPSPTEPSSKTG. Residues 246–265 form a helical membrane-spanning segment; it reads VLIGTSVVKIPFTILLFFLL. Residues 266-304 are Cytoplasmic-facing; sequence HRWCSNKKNAAVMDQEPAGNRTVNSEDSDEQDHQEVSYA. The segment at 280–304 is disordered; it reads QEPAGNRTVNSEDSDEQDHQEVSYA.

Belongs to the immunoglobulin superfamily.

The protein localises to the cell membrane. Its function is as follows. Receptor on natural killer (NK) cells for HLA-C alleles. Does not inhibit the activity of NK cells. The sequence is that of Killer cell immunoglobulin-like receptor 2DS2 from Homo sapiens (Human).